The sequence spans 384 residues: uncharacterized protein (384 aa).

The next 10 helical transmembrane spans lie at 11 to 31, 33 to 53, 66 to 86, 94 to 114, 153 to 173, 197 to 217, 224 to 244, 284 to 304, 309 to 329, and 342 to 362; these read LWFIAISAAGGFILSLTGISI, WMIGTLIVACCLAMIRPAWLM, LALGQMILGIELGQKLNLSVL, FSVGVMLILSILLAMLSGYVL, LVQMMRVLLVVLSIPFLVILI, LAPVLWTVILILAAWGACKAA, APWLLGSMLGVAIVHVGGAAV, IIIVGFVSSVGLIAAMFLSAV, LTGISLITSVLAFAPGGIAEM, and FVVAVQVIRVILVIALLPPFY.

This sequence belongs to the AbrB family.

The protein resides in the cell membrane. This is an uncharacterized protein from Bacillus subtilis (strain 168).